Here is a 1160-residue protein sequence, read N- to C-terminus: Major DNA-binding protein (1160 aa).

Residues 808–809 (FW) carry the Required for filament formation motif. Residues 1139–1160 (ARGGEHAFDEDCGLLPAKRGRL) are required for nuclear localization.

The protein belongs to the herpesviridae major DNA-binding protein family. As to quaternary structure, homooligomers. Forms double-helical filaments necessary for the formation of replication compartments within the host nucleus. Interacts with the origin-binding protein. Interacts with the helicase primase complex; this interaction stimulates primer synthesis activity of the helicase-primase complex. Interacts with the DNA polymerase. Interacts with the alkaline exonuclease; this interaction increases its nuclease processivity.

Its subcellular location is the host nucleus. In terms of biological role, single-stranded DNA-binding protein required for DNA replication. Functionally, plays several crucial roles in viral infection. Participates in the opening of the viral DNA origin to initiate replication by interacting with the origin-binding protein. May disrupt loops, hairpins and other secondary structures present on ssDNA to reduce and eliminate pausing of viral DNA polymerase at specific sites during elongation. Promotes viral DNA recombination by performing strand-transfer, characterized by the ability to transfer a DNA strand from a linear duplex to a complementary single-stranded DNA circle. Can also catalyze the renaturation of complementary single strands. Additionally, reorganizes the host cell nucleus, leading to the formation of prereplicative sites and replication compartments. This process is driven by the protein which can form double-helical filaments in the absence of DNA. The sequence is that of Major DNA-binding protein from Simian cytomegalovirus (strain Colburn).